We begin with the raw amino-acid sequence, 397 residues long: Acetate kinase (397 aa).

A Mg(2+)-binding site is contributed by asparagine 8. Residue lysine 15 coordinates ATP. Arginine 92 lines the substrate pocket. Aspartate 149 functions as the Proton donor/acceptor in the catalytic mechanism. ATP contacts are provided by residues histidine 209–glycine 213, aspartate 283–arginine 285, and glycine 331–asparagine 335. Glutamate 385 contributes to the Mg(2+) binding site.

This sequence belongs to the acetokinase family. Homodimer. It depends on Mg(2+) as a cofactor. Mn(2+) serves as cofactor.

The protein localises to the cytoplasm. The enzyme catalyses acetate + ATP = acetyl phosphate + ADP. Its pathway is metabolic intermediate biosynthesis; acetyl-CoA biosynthesis; acetyl-CoA from acetate: step 1/2. Its function is as follows. Catalyzes the formation of acetyl phosphate from acetate and ATP. Can also catalyze the reverse reaction. In Corynebacterium glutamicum (strain ATCC 13032 / DSM 20300 / JCM 1318 / BCRC 11384 / CCUG 27702 / LMG 3730 / NBRC 12168 / NCIMB 10025 / NRRL B-2784 / 534), this protein is Acetate kinase.